The sequence spans 150 residues: Large ribosomal subunit protein bL9 (150 aa).

It belongs to the bacterial ribosomal protein bL9 family.

Functionally, binds to the 23S rRNA. The sequence is that of Large ribosomal subunit protein bL9 from Cupriavidus metallidurans (strain ATCC 43123 / DSM 2839 / NBRC 102507 / CH34) (Ralstonia metallidurans).